The sequence spans 416 residues: Solute carrier family 25 member 46 (416 aa).

The segment covering 1 to 13 has biased composition (basic and acidic residues); sequence MQPRRPDRFDGLE. The segment at 1 to 91 is disordered; it reads MQPRRPDRFD…GEESSSSSSG (91 aa). A compositionally biased stretch (polar residues) spans 37-49; sequence SFSSSGDLSQHWV. Over residues 82–91 the composition is skewed to low complexity; sequence GEESSSSSSG. The stretch at 94–185 is one Solcar 1 repeat; sequence HLNRFAGFGI…GMLSEFTHLP (92 aa). The next 6 helical transmembrane spans lie at 101–121, 161–181, 197–217, 256–276, 312–332, and 381–401; these read FGIG…CIVL, MGST…LSEF, IGGH…FYSA, LLPL…HYII, FPEL…LYPL, and LGFY…AIVL. The Solcar 2 repeat unit spans residues 309–414; sequence EDYFPELIAN…KIIYSSVVQT (106 aa).

It belongs to the mitochondrial carrier (TC 2.A.29) family.

Its subcellular location is the mitochondrion outer membrane. Its function is as follows. May play a role in mitochondrial dynamics by controlling mitochondrial membrane fission. This chain is Solute carrier family 25 member 46 (slc25a46), found in Xenopus tropicalis (Western clawed frog).